A 249-amino-acid chain; its full sequence is NAD kinase (249 aa).

The Proton acceptor role is filled by Asp49. NAD(+)-binding positions include 49–50 (DG), Arg54, 115–116 (NE), Lys126, Arg143, Asp145, Ile153, 156–161 (TGYAFS), Ala180, and Gln211.

This sequence belongs to the NAD kinase family. In terms of assembly, homotetramer. Requires a divalent metal cation as cofactor.

The protein localises to the cytoplasm. It carries out the reaction NAD(+) + ATP = ADP + NADP(+) + H(+). Functionally, involved in the regulation of the intracellular balance between NAD(H) and NADP(H), and is a key enzyme in the biosynthesis of NADP. Catalyzes specifically the phosphorylation on 2'-hydroxyl of the adenosine moiety of NAD to yield NADP. In Archaeoglobus fulgidus (strain ATCC 49558 / DSM 4304 / JCM 9628 / NBRC 100126 / VC-16), this protein is NAD kinase.